Here is a 283-residue protein sequence, read N- to C-terminus: Bis(5'-nucleosyl)-tetraphosphatase, symmetrical (283 aa).

This sequence belongs to the Ap4A hydrolase family.

The enzyme catalyses P(1),P(4)-bis(5'-adenosyl) tetraphosphate + H2O = 2 ADP + 2 H(+). Hydrolyzes diadenosine 5',5'''-P1,P4-tetraphosphate to yield ADP. The protein is Bis(5'-nucleosyl)-tetraphosphatase, symmetrical of Serratia proteamaculans (strain 568).